Consider the following 142-residue polypeptide: MRLLGLDVGSKTIGVAVSDPLGITAQAVMTIPIDEDRHNFGMRSLKKLVREYEANGFVLGLPKNMDGTAGRSVSRSKAMGERLEQKFGLPVYYDDERLTTVASERILVEEAGMHDRRQRKEVVDQMAAVLILQNYLDLQRKE.

The protein belongs to the YqgF nuclease family.

Its subcellular location is the cytoplasm. In terms of biological role, could be a nuclease involved in processing of the 5'-end of pre-16S rRNA. In Lactobacillus delbrueckii subsp. bulgaricus (strain ATCC BAA-365 / Lb-18), this protein is Putative pre-16S rRNA nuclease.